The following is a 572-amino-acid chain: Urease subunit alpha (572 aa).

One can recognise a Urease domain in the interval Gly136–Phe572. Ni(2+)-binding residues include His141, His143, and Lys224. N6-carboxylysine is present on Lys224. Position 226 (His226) interacts with substrate. Ni(2+) contacts are provided by His253 and His279. Residue His327 is the Proton donor of the active site. Asp367 contributes to the Ni(2+) binding site.

It belongs to the metallo-dependent hydrolases superfamily. Urease alpha subunit family. In terms of assembly, heterotrimer of UreA (gamma), UreB (beta) and UreC (alpha) subunits. Three heterotrimers associate to form the active enzyme. Ni cation serves as cofactor. Carboxylation allows a single lysine to coordinate two nickel ions.

The protein resides in the cytoplasm. It carries out the reaction urea + 2 H2O + H(+) = hydrogencarbonate + 2 NH4(+). Its pathway is nitrogen metabolism; urea degradation; CO(2) and NH(3) from urea (urease route): step 1/1. This Actinobacillus pleuropneumoniae serotype 5b (strain L20) protein is Urease subunit alpha.